Here is a 338-residue protein sequence, read N- to C-terminus: Heat-inducible transcription repressor HrcA (338 aa).

The protein belongs to the HrcA family.

Negative regulator of class I heat shock genes (grpE-dnaK-dnaJ and groELS operons). Prevents heat-shock induction of these operons. This chain is Heat-inducible transcription repressor HrcA, found in Bacillus cereus (strain AH187).